Consider the following 224-residue polypeptide: Biosynthetic peptidoglycan transglycosylase (224 aa).

The helical transmembrane segment at 12–32 (ILVVLAILPVFLLLVYSLPFV) threads the bilayer.

It belongs to the glycosyltransferase 51 family.

It localises to the cell inner membrane. The enzyme catalyses [GlcNAc-(1-&gt;4)-Mur2Ac(oyl-L-Ala-gamma-D-Glu-L-Lys-D-Ala-D-Ala)](n)-di-trans,octa-cis-undecaprenyl diphosphate + beta-D-GlcNAc-(1-&gt;4)-Mur2Ac(oyl-L-Ala-gamma-D-Glu-L-Lys-D-Ala-D-Ala)-di-trans,octa-cis-undecaprenyl diphosphate = [GlcNAc-(1-&gt;4)-Mur2Ac(oyl-L-Ala-gamma-D-Glu-L-Lys-D-Ala-D-Ala)](n+1)-di-trans,octa-cis-undecaprenyl diphosphate + di-trans,octa-cis-undecaprenyl diphosphate + H(+). Its pathway is cell wall biogenesis; peptidoglycan biosynthesis. Its function is as follows. Peptidoglycan polymerase that catalyzes glycan chain elongation from lipid-linked precursors. The protein is Biosynthetic peptidoglycan transglycosylase of Brucella suis biovar 1 (strain 1330).